The primary structure comprises 398 residues: Stimulator of interferon genes protein (398 aa).

The Cytoplasmic segment spans residues 1–16 (MSVMGEDALVPRARSR). Residues 17 to 37 (LPVMCAAGLGFLTLAVAWLLD) traverse the membrane as a helical segment. Over 38 to 44 (SDKFSER) the chain is Lumenal. A helical membrane pass occupies residues 45 to 65 (AGIIAFGLMLERFIYCICLLA). Residues 66-91 (EELLFHSRQRYHGRMSEIFRACFRGS) are Cytoplasmic-facing. Residues 92-112 (GILGMCAIFLMLMLGGVSFSV) form a helical membrane-spanning segment. The Lumenal portion of the chain corresponds to 113–120 (KQWSHFNL). Residues 121–141 (MCAGYMLLNSLGVLGPAPVEI) form a helical membrane-spanning segment. Topologically, residues 142–398 (SEICEAKKMN…FNPSSAMKQN (257 aa)) are cytoplasmic. The cyclic dinucleotide-binding domain (CBD) stretch occupies residues 150-331 (MNVAHGLAWS…QNLKQQDGEI (182 aa)). 4 residues coordinate 2',3'-cGAMP: serine 159, tyrosine 164, arginine 230, and threonine 254. 3',3'-c-di-GMP-binding positions include serine 159, tyrosine 164, 230–233 (RSYT), and threonine 254. The interval 375 to 398 (PQSLRSEPVETTDYFNPSSAMKQN) is disordered. The span at 387–398 (DYFNPSSAMKQN) shows a compositional bias: polar residues.

It belongs to the STING family. As to quaternary structure, homodimer; forms a homodimer in absence of cyclic nucleotide (c-di-GMP or cGAMP). Homotetramer; in presence of cyclic nucleotide (c-di-GMP or cGAMP), forms tetramers and higher-order oligomers through side-by-side packing. Interacts (when phosphorylated) with irf3; following activation and phosphorylation by tbk1, recruits irf3. Phosphorylation by TBK1 leads to activation and production of IFN-beta. Following cyclic nucleotide (c-di-GMP or cGAMP)-binding, activation and translocation from the endoplasmic reticulum, STING1 is phosphorylated by tbk1, leading to recruitment of the transcription factor irf3 to induce type-I interferons and other cytokines.

Its subcellular location is the endoplasmic reticulum membrane. The protein resides in the cytoplasm. It is found in the perinuclear region. The protein localises to the endoplasmic reticulum-Golgi intermediate compartment membrane. It localises to the golgi apparatus membrane. Its subcellular location is the cytoplasmic vesicle. The protein resides in the autophagosome membrane. It catalyses the reaction H(+)(in) = H(+)(out). Its function is as follows. Facilitator of innate immune signaling that acts as a sensor of cytosolic DNA from bacteria and viruses and promotes the production of type I interferon (IFN-alpha and IFN-beta). Innate immune response is triggered in response to non-CpG double-stranded DNA from viruses and bacteria delivered to the cytoplasm. Acts by binding cyclic dinucleotides: recognizes and binds cyclic di-GMP (c-di-GMP), a second messenger produced by bacteria, and cyclic GMP-AMP (cGAMP), a messenger produced by CGAS in response to DNA virus in the cytosol. Upon binding of c-di-GMP or cGAMP, STING1 oligomerizes and is able to activate both NF-kappa-B and irf3 transcription pathways to induce expression of type I interferon and exert a potent anti-viral state. Exhibits 2',3' phosphodiester linkage-specific ligand recognition: can bind both 2'-3' linked cGAMP and 3'-3' linked cGAMP but is preferentially activated by 2'-3' linked cGAMP. In addition to promote the production of type I interferons, plays a direct role in autophagy. Following cGAMP-binding, STING1 buds from the endoplasmic reticulum into COPII vesicles, which then form the endoplasmic reticulum-Golgi intermediate compartment (ERGIC). The ERGIC serves as the membrane source for LC3 lipidation, leading to formation of autophagosomes that target cytosolic DNA or DNA viruses for degradation by the lysosome. Promotes autophagy by acting as a proton channel that directs proton efflux from the Golgi to facilitate LC3 lipidation. The autophagy- and interferon-inducing activities can be uncoupled and autophagy induction is independent of TBK1 phosphorylation. This chain is Stimulator of interferon genes protein, found in Danio rerio (Zebrafish).